The following is a 447-amino-acid chain: Chromosomal replication initiator protein DnaA (447 aa).

The interval 1-66 (MSNRIISILK…SKAIKEAYGK (66 aa)) is domain I, interacts with DnaA modulators. A domain II region spans residues 66–102 (KNLDYEIVYETTEPEAFNKSNESYKGPLVKKKPLLIS). A domain III, AAA+ region region spans residues 103-319 (NLNANYTFEN…GVIIKLIVQS (217 aa)). Positions 146, 148, 149, and 150 each coordinate ATP. The interval 320–447 (SINKERIGAA…NTMATSSAAG (128 aa)) is domain IV, binds dsDNA.

This sequence belongs to the DnaA family. As to quaternary structure, oligomerizes as a right-handed, spiral filament on DNA at oriC.

The protein localises to the cytoplasm. Its function is as follows. Plays an essential role in the initiation and regulation of chromosomal replication. ATP-DnaA binds to the origin of replication (oriC) to initiate formation of the DNA replication initiation complex once per cell cycle. Binds the DnaA box (a 9 base pair repeat at the origin) and separates the double-stranded (ds)DNA. Forms a right-handed helical filament on oriC DNA; dsDNA binds to the exterior of the filament while single-stranded (ss)DNA is stabiized in the filament's interior. The ATP-DnaA-oriC complex binds and stabilizes one strand of the AT-rich DNA unwinding element (DUE), permitting loading of DNA polymerase. After initiation quickly degrades to an ADP-DnaA complex that is not apt for DNA replication. Binds acidic phospholipids. The chain is Chromosomal replication initiator protein DnaA from Kosmotoga olearia (strain ATCC BAA-1733 / DSM 21960 / TBF 19.5.1).